The sequence spans 968 residues: Sorting nexin-13 (968 aa).

Positions 97 to 284 (ANIIDEPLQQ…YVIWMIRDSN (188 aa)) constitute a PXA domain. Residues 373–496 (PLDSILVDNV…RKVYELMLRD (124 aa)) enclose the RGS domain. One can recognise a PX domain in the interval 570 to 691 (YADYDPYAVA…DFLENKAYSK (122 aa)). Arginine 612, serine 614, lysine 639, and arginine 653 together coordinate a 1,2-diacyl-sn-glycero-3-phospho-(1D-myo-inositol-3-phosphate).

It belongs to the sorting nexin family.

The protein resides in the early endosome membrane. In terms of biological role, may be involved in several stages of intracellular trafficking. May play a role in endosome homeostasis. Acts as a GAP for Galphas. This chain is Sorting nexin-13 (SNX13), found in Homo sapiens (Human).